The chain runs to 326 residues: tRNA dimethylallyltransferase 2 (326 aa).

14-21 (GPTASGKT) lines the ATP pocket. 16 to 21 (TASGKT) is a binding site for substrate. An interaction with substrate tRNA region spans residues 39-42 (DSMQ).

This sequence belongs to the IPP transferase family. As to quaternary structure, monomer. It depends on Mg(2+) as a cofactor.

It carries out the reaction adenosine(37) in tRNA + dimethylallyl diphosphate = N(6)-dimethylallyladenosine(37) in tRNA + diphosphate. Its function is as follows. Catalyzes the transfer of a dimethylallyl group onto the adenine at position 37 in tRNAs that read codons beginning with uridine, leading to the formation of N6-(dimethylallyl)adenosine (i(6)A). The sequence is that of tRNA dimethylallyltransferase 2 from Geotalea daltonii (strain DSM 22248 / JCM 15807 / FRC-32) (Geobacter daltonii).